The following is a 254-amino-acid chain: RNA polymerase sigma factor SigI8 (254 aa).

The Polymerase core binding signature appears at 61–74; sequence DEYSIALIAFNEAI. A DNA-binding region (H-T-H motif) is located at residues 209-228; it reads YKELTERFNLCRRTLEKNRK.

The protein belongs to the sigma-70 factor family. SigI subfamily. As to quaternary structure, interacts with RsgI8.

It localises to the cytoplasm. Negatively regulated by the anti-sigma-I factor RsgI8. Sigma factors are initiation factors that promote the attachment of RNA polymerase to specific initiation sites and are then released. The chain is RNA polymerase sigma factor SigI8 from Acetivibrio thermocellus (strain ATCC 27405 / DSM 1237 / JCM 9322 / NBRC 103400 / NCIMB 10682 / NRRL B-4536 / VPI 7372) (Clostridium thermocellum).